The sequence spans 447 residues: Dihydroorotase (447 aa).

Zn(2+) is bound by residues His-81 and His-83. Residues 83 to 85 (HFR) and Asn-115 contribute to the substrate site. Zn(2+)-binding residues include Asp-171, His-198, and His-252. Asn-298 provides a ligand contact to substrate. Position 325 (Asp-325) interacts with Zn(2+). Asp-325 is a catalytic residue. Substrate-binding positions include His-329 and 343-344 (FG).

Belongs to the metallo-dependent hydrolases superfamily. DHOase family. Class I DHOase subfamily. Requires Zn(2+) as cofactor.

The enzyme catalyses (S)-dihydroorotate + H2O = N-carbamoyl-L-aspartate + H(+). It participates in pyrimidine metabolism; UMP biosynthesis via de novo pathway; (S)-dihydroorotate from bicarbonate: step 3/3. Its function is as follows. Catalyzes the reversible cyclization of carbamoyl aspartate to dihydroorotate. The chain is Dihydroorotase from Ehrlichia chaffeensis (strain ATCC CRL-10679 / Arkansas).